The chain runs to 31 residues: Cyclotide mech-4 (31 aa).

The cyclopeptide (Gly-Asp) cross-link spans 1–31 (GSIPCGESCVYIPCISSLLGCSCKSKVCYKD). Intrachain disulfides connect Cys5-Cys21, Cys9-Cys23, and Cys14-Cys28.

In terms of processing, this is a cyclic peptide. Post-translationally, contains 3 disulfide bonds.

Its function is as follows. Probably participates in a plant defense mechanism (Potential). Binds to and induces leakage in phospholipd membranes, particularly ones containing 1-palmitoyl-2-oleophosphatidylethanolamine (POPE). The protein is Cyclotide mech-4 of Melicytus chathamicus (Chatham Island mahoe).